The sequence spans 415 residues: MTSSHLIDTEQLLADQLAQASPDLLRGLLSTFIAALMGAEADALCGAGYRERSDERSNQRNGYRHRDFDTRAATIDVAIPKLRQGSYFPDWLLQRRKRAERALTSVVATCYLLGVSTRRMERLVETLGVTKLSKSQVSIMAKELDEAVEAFRTRPLDAGPYTFLAADALVLKVREAGRVVGVHTLIATGVNAEGYREILGIQVTSAEDGAGWLAFFRDLVARGLSGVALVTSDAHAGLVAAIGATLPAAAWQRCRTHYAANLMAATPKPSWPWVRTLLHSIYDQPDAESVVAQYDRVLDALTDKLPAVAEHLDTARTDLLAFTAFPKQIWRQIWSNNPQERLNREVRRRTDVVGIFPDRASIIRLVGAVLAEQHDEWIEGRRYLGLEVLTRARAALTSTEEPAKQQTTNTPALTT.

Belongs to the transposase mutator family.

Functionally, required for the transposition of the insertion element. The chain is Transposase for insertion sequence element IS1081 from Mycobacterium bovis (strain ATCC BAA-935 / AF2122/97).